The sequence spans 110 residues: Guanine nucleotide-binding protein subunit gamma (110 aa).

A lipid anchor (S-palmitoyl cysteine) is attached at cysteine 106. Cysteine 107 is modified (cysteine methyl ester). Cysteine 107 carries the S-farnesyl cysteine lipid modification. A propeptide spans 108–110 (TLM) (removed in mature form).

It belongs to the G protein gamma family. G proteins are composed of 3 units, alpha, beta and gamma. The beta-gamma subunit complex (STE4-STE18 complex) interacts with PLP1 and PLP2.

It localises to the membrane. Functionally, implicated in the pheromone A- and alpha-factor response pathway. The beta and gamma chains of the putative yeast mating response pathway G protein play a positive role in initiation of the mating response. In Saccharomyces cerevisiae (strain ATCC 204508 / S288c) (Baker's yeast), this protein is Guanine nucleotide-binding protein subunit gamma (STE18).